We begin with the raw amino-acid sequence, 616 residues long: MNALIVKSALEYLELSTVVAILIIIACALLSYQISARRPLYYNLFVVEMHTWTTRRMVQVLHLGQEFTPPVTWERLVQRMRARAPRIQGEQRVAISDTNIVIQSPNTVIDSPAPARSPDVDLITLWDIEMPPPSAGHVPDATRDSQYAAAAAIAILARGDDASLMSRTYRPQLRPPTERSGNTRVDESRPSENSSRHDYVTTDVTYTTPSINPDMQHHLSTRTSNVTQTQPPTNQVFADTPELTEDIVIDQQEEDDEEDDDDDSSDDAIIEDHEEEEGQDDDEETEIEIDRGGPIEEIEQVEVEQNEDPPLDDQEVEAQPEQVLQETKESEFPVIEGPSEGKILIKLKFMNDTEKNTYASLEDTVAKFKVDHFTNLANQVIRLIYQGQLLREDHRTLEEYGLQPGSIVHCHISTTPYTRPGIATLPPIVNNGFRRRPRRSVRAPRDTTPMPSESVPVVDENVTTARRRAAQDRNVGQIYLLLSTMVPILSGIGLAFFRPDRIRDLLRPATLLTISQWVCNLLVDNGLLEQDDDDQETHLQTSTLFWIFGGQMVAVSIFLYYFPDVFDRVGFSIFIIVFLYFVFVVYSRQRRRQPDPVEVQNEMMENQIVQETIRLL.

Disordered stretches follow at residues 166-243 (SRTY…TPEL) and 272-298 (DHEE…IEEI). Residues 184–200 (RVDESRPSENSSRHDYV) are compositionally biased toward basic and acidic residues. Residues 221 to 237 (TRTSNVTQTQPPTNQVF) show a composition bias toward polar residues. Residues 272–287 (DHEEEEGQDDDEETEI) are compositionally biased toward acidic residues. In terms of domain architecture, Ubiquitin-like spans 343 to 417 (ILIKLKFMND…VHCHISTTPY (75 aa)).

This is an uncharacterized protein from Caenorhabditis elegans.